The primary structure comprises 423 residues: Kynureninase (423 aa).

Residues leucine 105, serine 106, 133 to 136, aspartate 218, histidine 221, and tyrosine 243 each bind pyridoxal 5'-phosphate; that span reads FPSD. At lysine 244 the chain carries N6-(pyridoxal phosphate)lysine. Residues tryptophan 273 and asparagine 301 each coordinate pyridoxal 5'-phosphate.

The protein belongs to the kynureninase family. As to quaternary structure, homodimer. Pyridoxal 5'-phosphate serves as cofactor.

It carries out the reaction L-kynurenine + H2O = anthranilate + L-alanine + H(+). The catalysed reaction is 3-hydroxy-L-kynurenine + H2O = 3-hydroxyanthranilate + L-alanine + H(+). Its pathway is amino-acid degradation; L-kynurenine degradation; L-alanine and anthranilate from L-kynurenine: step 1/1. The protein operates within cofactor biosynthesis; NAD(+) biosynthesis; quinolinate from L-kynurenine: step 2/3. In terms of biological role, catalyzes the cleavage of L-kynurenine (L-Kyn) and L-3-hydroxykynurenine (L-3OHKyn) into anthranilic acid (AA) and 3-hydroxyanthranilic acid (3-OHAA), respectively. This is Kynureninase from Xanthomonas axonopodis pv. citri (strain 306).